The sequence spans 493 residues: Glycerol kinase (493 aa).

An ADP-binding site is contributed by Thr-11. Thr-11, Thr-12, and Ser-13 together coordinate ATP. Thr-11 lines the sn-glycerol 3-phosphate pocket. Position 15 (Arg-15) interacts with ADP. Sn-glycerol 3-phosphate contacts are provided by Arg-80, Glu-81, Tyr-132, and Asp-241. Residues Arg-80, Glu-81, Tyr-132, Asp-241, and Gln-242 each contribute to the glycerol site. ADP contacts are provided by Thr-263 and Gly-306. The ATP site is built by Thr-263, Gly-306, Gln-310, and Gly-408. Residue Gly-408 coordinates ADP.

This sequence belongs to the FGGY kinase family.

The catalysed reaction is glycerol + ATP = sn-glycerol 3-phosphate + ADP + H(+). It participates in polyol metabolism; glycerol degradation via glycerol kinase pathway; sn-glycerol 3-phosphate from glycerol: step 1/1. With respect to regulation, inhibited by fructose 1,6-bisphosphate (FBP). Its function is as follows. Key enzyme in the regulation of glycerol uptake and metabolism. Catalyzes the phosphorylation of glycerol to yield sn-glycerol 3-phosphate. In Cereibacter sphaeroides (strain KD131 / KCTC 12085) (Rhodobacter sphaeroides), this protein is Glycerol kinase.